Reading from the N-terminus, the 190-residue chain is dTTP/UTP pyrophosphatase (190 aa).

Asp-67 serves as the catalytic Proton acceptor.

This sequence belongs to the Maf family. YhdE subfamily. A divalent metal cation is required as a cofactor.

The protein resides in the cytoplasm. It catalyses the reaction dTTP + H2O = dTMP + diphosphate + H(+). The enzyme catalyses UTP + H2O = UMP + diphosphate + H(+). Nucleoside triphosphate pyrophosphatase that hydrolyzes dTTP and UTP. May have a dual role in cell division arrest and in preventing the incorporation of modified nucleotides into cellular nucleic acids. This Aquifex aeolicus (strain VF5) protein is dTTP/UTP pyrophosphatase.